We begin with the raw amino-acid sequence, 353 residues long: tRNA-specific 2-thiouridylase MnmA 2 (353 aa).

ATP is bound by residues 9–16 (AMSGGVDS) and Met35. The active-site Nucleophile is the Cys98. The cysteines at positions 98 and 194 are disulfide-linked. Gly122 is a binding site for ATP. The interval 144–146 (KDQ) is interaction with tRNA. The Cysteine persulfide intermediate role is filled by Cys194. The tract at residues 300–301 (RY) is interaction with tRNA.

Belongs to the MnmA/TRMU family.

It localises to the cytoplasm. The catalysed reaction is S-sulfanyl-L-cysteinyl-[protein] + uridine(34) in tRNA + AH2 + ATP = 2-thiouridine(34) in tRNA + L-cysteinyl-[protein] + A + AMP + diphosphate + H(+). Its function is as follows. Catalyzes the 2-thiolation of uridine at the wobble position (U34) of tRNA, leading to the formation of s(2)U34. This chain is tRNA-specific 2-thiouridylase MnmA 2, found in Clostridium botulinum (strain Langeland / NCTC 10281 / Type F).